Here is a 245-residue protein sequence, read N- to C-terminus: Ribonuclease 3 (245 aa).

The region spanning 19 to 148 is the RNase III domain; it reads FKLFQEKIGI…FIGALYLDQG (130 aa). A Mg(2+)-binding site is contributed by Glu61. Residue Asp65 is part of the active site. Positions 134 and 137 each coordinate Mg(2+). Glu137 is a catalytic residue. One can recognise a DRBM domain in the interval 174–243; that stretch reads DYKSQLQELI…AAEALKKLKE (70 aa).

Belongs to the ribonuclease III family. Homodimer. Mg(2+) is required as a cofactor.

It is found in the cytoplasm. The enzyme catalyses Endonucleolytic cleavage to 5'-phosphomonoester.. Its function is as follows. Digests double-stranded RNA. Involved in the processing of primary rRNA transcript to yield the immediate precursors to the large and small rRNAs (23S and 16S). Processes some mRNAs, and tRNAs when they are encoded in the rRNA operon. Processes pre-crRNA and tracrRNA of type II CRISPR loci if present in the organism. The chain is Ribonuclease 3 from Bacillus cereus (strain 03BB102).